We begin with the raw amino-acid sequence, 1065 residues long: Leucine-rich repeats and immunoglobulin-like domains protein 2 (1065 aa).

An N-terminal signal peptide occupies residues 1–40; that stretch reads MAPAPLGVPEEQLLGCRSRVLSRLLFIAQTALLLLPAAGA. Residues 41 to 75 form the LRRNT domain; it reads GLCPAPCSCRIPLLDCSRRKLPAPSWRALSGLLPP. Residues 41–807 lie on the Extracellular side of the membrane; sequence GLCPAPCSCR…HEDDGWTTVG (767 aa). LRR repeat units follow at residues 76-97, 98-119, 121-142, 145-166, 168-189, 193-214, 216-237, 240-261, 264-285, 288-309, 312-333, 336-357, 360-382, 387-408, and 411-432; these read DTAILDFSHNRLSNWNISLESQ, TLQEVKMNYNELTEIPYFGEPT, NITLLSLVHNIIPEINAQALQF, ALESLDLSSNIISEIKTSSFPR, QLKYLNLSNNRITTLEAGCFDN, SLLVVKLNRNRMSMIPPKIFKL, HLQFLELKRNRIKIVEGLTFQG, SLRSLKMQRNGISKLKDGAFFG, NMEELELEHNNLTRVNKGWLYG, MLQQLYVSQNAIERISPDAWEF, RLSELDLSYNQLTRLDESAFVG, LLERLNLGDNRVTHIADGVFRF, NLQTLDLRNNEISWAIEDASEAF, SLTKLILQGNQIKSITKKAFIG, and SLEHLDLNNNAIMSIQENAFSQ. Asn-91 carries N-linked (GlcNAc...) asparagine glycosylation. Asn-121 is a glycosylation site (N-linked (GlcNAc...) asparagine). Residues Asn-173 and Asn-189 are each glycosylated (N-linked (GlcNAc...) asparagine). The N-linked (GlcNAc...) asparagine glycan is linked to Asn-274. Asn-441, Asn-468, Asn-514, Asn-571, and Asn-589 each carry an N-linked (GlcNAc...) asparagine glycan. The LRRCT domain occupies 443–494; sequence SSLLCDCHLKWLLQWLVDNNFQHSVNVSCAHPEWLAGQSILNVDLKDFVCDD. Ig-like C2-type domains lie at 498–597, 602–691, and 696–785; these read PQIR…AKLT, PSFL…ASLT, and PSFI…NVIS. Residues Cys-519 and Cys-580 are joined by a disulfide bond. The cysteines at positions 623 and 675 are disulfide-linked. N-linked (GlcNAc...) asparagine glycans are attached at residues Asn-687 and Asn-728. An intrachain disulfide couples Cys-717 to Cys-766. Residues 808 to 828 traverse the membrane as a helical segment; it reads IVIIVVVCCVVGTSLIWVIVI. Residues 829-1065 lie on the Cytoplasmic side of the membrane; the sequence is YHMRRKNEDY…RNIQDGSEGT (237 aa). Tyr-906 is modified (phosphotyrosine). Disordered regions lie at residues 963–990 and 1003–1040; these read SANREPSAFPTNHERISEKKLPSTQMSG and ELGLPHPPFSQQPVHESPQLHQNEGLAGREPDCSASSM. A compositionally biased stretch (basic and acidic residues) spans 974–983; it reads NHERISEKKL. A compositionally biased stretch (polar residues) spans 1013–1024; sequence QQPVHESPQLHQ.

In terms of tissue distribution, detected in all tissues analyzed.

It localises to the cell membrane. The protein localises to the cytoplasm. The polypeptide is Leucine-rich repeats and immunoglobulin-like domains protein 2 (LRIG2) (Homo sapiens (Human)).